We begin with the raw amino-acid sequence, 119 residues long: MIKINTAYQMKKPSEIDFQTMSNTTDSKFWELLGTTGGYPFTVISVNSGILIGTVYMEIRNYYGRVSSFIIYEEDFNLLTEIEKPEDPTDLLCKAVYIRRPFANPIGGWVTDQWIGRWR.

This is an uncharacterized protein from Escherichia coli (Bacteriophage T4).